The following is a 293-amino-acid chain: uncharacterized protein (293 aa).

Glutamate 47 is a catalytic residue.

This sequence belongs to the PhzF family.

This is an uncharacterized protein from Bacillus subtilis (strain 168).